The chain runs to 408 residues: Argininosuccinate synthase (408 aa).

Residue Ala8 to Thr16 coordinates ATP. Position 86 (Tyr86) interacts with L-citrulline. Residue Gly116 participates in ATP binding. The L-aspartate site is built by Thr118, Asn122, and Asp123. L-citrulline is bound at residue Asn122. L-citrulline contacts are provided by Arg126, Ser177, Ser186, Glu263, and Tyr275.

Belongs to the argininosuccinate synthase family. Type 1 subfamily. In terms of assembly, homotetramer.

The protein resides in the cytoplasm. It catalyses the reaction L-citrulline + L-aspartate + ATP = 2-(N(omega)-L-arginino)succinate + AMP + diphosphate + H(+). It participates in amino-acid biosynthesis; L-arginine biosynthesis; L-arginine from L-ornithine and carbamoyl phosphate: step 2/3. The chain is Argininosuccinate synthase from Agathobacter rectalis (strain ATCC 33656 / DSM 3377 / JCM 17463 / KCTC 5835 / VPI 0990) (Eubacterium rectale).